Consider the following 104-residue polypeptide: Large ribosomal subunit protein bL21 (104 aa).

The protein belongs to the bacterial ribosomal protein bL21 family. As to quaternary structure, part of the 50S ribosomal subunit. Contacts protein L20.

Functionally, this protein binds to 23S rRNA in the presence of protein L20. The chain is Large ribosomal subunit protein bL21 from Clostridium botulinum (strain Kyoto / Type A2).